A 293-amino-acid chain; its full sequence is Bifunctional protein FolD (293 aa).

Residues 166 to 168 (GRS), serine 191, and isoleucine 232 contribute to the NADP(+) site.

This sequence belongs to the tetrahydrofolate dehydrogenase/cyclohydrolase family. Homodimer.

The enzyme catalyses (6R)-5,10-methylene-5,6,7,8-tetrahydrofolate + NADP(+) = (6R)-5,10-methenyltetrahydrofolate + NADPH. The catalysed reaction is (6R)-5,10-methenyltetrahydrofolate + H2O = (6R)-10-formyltetrahydrofolate + H(+). Its pathway is one-carbon metabolism; tetrahydrofolate interconversion. Functionally, catalyzes the oxidation of 5,10-methylenetetrahydrofolate to 5,10-methenyltetrahydrofolate and then the hydrolysis of 5,10-methenyltetrahydrofolate to 10-formyltetrahydrofolate. The chain is Bifunctional protein FolD from Synechococcus sp. (strain JA-2-3B'a(2-13)) (Cyanobacteria bacterium Yellowstone B-Prime).